Here is a 117-residue protein sequence, read N- to C-terminus: Cysteine rich necrotrophic effector Tox1 (117 aa).

The first 17 residues, 1–17 (MKLTMVLSVAFATLTFA), serve as a signal peptide directing secretion. 8 disulfide bridges follow: Cys36/Cys87, Cys44/Cys55, Cys53/Cys58, Cys54/Cys98, Cys63/Cys83, Cys67/Cys117, Cys86/Cys97, and Cys107/Cys110. The segment at 87 to 117 (CNAGGESHELCCSIASAGIDCNPCTAGLRMC) is chitin-binding domain.

As to quaternary structure, interacts with host cell wall-associated kinase receptor Snn1.

It localises to the secreted. Necrotrophic effector that plays a critical role during fungal penetration, via its interaction with the host Snn1 protein. Snn1 is a member of the wall-associated kinase class of receptors, which are known to drive pathways for biotrophic pathogen resistance. Recognition of Tox1 by Snn1 induces mitogen-activated protein kinase genes such as MAPK3 and activates programmed cell death, which allows this necrotroph to gain nutrients and sporulate. Recognition of Tox1 by Snn1 also induces other plant defense responses, including oxidative burst and pathogenesis related (PR) gene expression. The development of necrosis and disease induced by Tox1, and particularly penetration during infection, requires light, which is probably related to the light-dependent expression of host Snn1. Tox1 plays an additional role in providing significant protection from wheat chitinases by binding chitin in the fungal cell wall. This is Cysteine rich necrotrophic effector Tox1 from Phaeosphaeria nodorum (strain SN15 / ATCC MYA-4574 / FGSC 10173) (Glume blotch fungus).